A 304-amino-acid polypeptide reads, in one-letter code: Glutaminase (304 aa).

Substrate-binding residues include Ser-63, Asn-113, Glu-157, Asn-164, Tyr-188, Tyr-240, and Val-258.

This sequence belongs to the glutaminase family. In terms of assembly, homotetramer.

It carries out the reaction L-glutamine + H2O = L-glutamate + NH4(+). This chain is Glutaminase, found in Chromobacterium violaceum (strain ATCC 12472 / DSM 30191 / JCM 1249 / CCUG 213 / NBRC 12614 / NCIMB 9131 / NCTC 9757 / MK).